Here is a 223-residue protein sequence, read N- to C-terminus: PKHD-type hydroxylase CPS_3426 (223 aa).

The Fe2OG dioxygenase domain maps to 77–175 (KSMMPFIISE…RKVALTWIES (99 aa)). The Fe cation site is built by His96, Asp98, and His156. Arg166 provides a ligand contact to 2-oxoglutarate.

Requires Fe(2+) as cofactor. L-ascorbate is required as a cofactor.

In Colwellia psychrerythraea (strain 34H / ATCC BAA-681) (Vibrio psychroerythus), this protein is PKHD-type hydroxylase CPS_3426.